Here is a 757-residue protein sequence, read N- to C-terminus: MDVNPTLLFLKVPAQNAISTTFPYTGDPPYSHGTGTGYTMDTVNRTHQYSEKGKWTTNTETGAPQLNPIDGPLPEDNEPSGYAQTDCVLEAMAFLEESHPGIFENSCLETMEIVQQTRVDKLTQGRQTYDWTLNRNQPAATALANTIEVFRSNGLTANESGRLIDSLKDVMESMDKEEMEITTHFQRKRRVRDNMTKKMVTQRTIGKKKQRLNKRSYLIRALTLNTMTKDAERGKLKRRAIATPGMQIRGFVYFVETLARSICEKLEQSGLPVGGNEKKAKLANVVRKMMTNSQDTELSFTITGDNTKWNENQNPRMFLAMITYITRNQPEWFRNVLSIAPIMFSNKMARLGKGYMFESKSMKLRTQIPAEMLASIDLKYFNESTRKKIERIRPLLIDGTASLSPGMMMGMFNMLSTVLGVSILNLGQKRYTKTTYWWDGLQSSDDFALIVNAPNHEGIQAGVDRFYRTCKLVGINMSKKKSYINRTGTFEFTSFFYRYGFVANFSMELPSFGVSGINESADMSIGVTVIKNNMINNDLGPATAQMALQLFIKDYRYTYRCHRGDTQIQTRRSFELKKLWEQTRSKAGLLVSDGGPNLYNIRNLHIPEVCLKWELMDEDYQGRLCNPLNPFVSHKEIESVNNAVVMPAHGPAKSMEYDAVATTHSWIPKRNRSILNTSQRGILEDEQMYQKCCNLFEKFFPSSSYRRPVGISSMVEAMVSRARIDARIDFESGRIKKEEFAEIMKICSTIEELRRQK.

The disordered stretch occupies residues 50-82 (SEKGKWTTNTETGAPQLNPIDGPLPEDNEPSGY). The segment covering 55-64 (WTTNTETGAP) has biased composition (polar residues). Short sequence motifs (nuclear localization signal) lie at residues 187 to 195 (RKRRVRDNM) and 203 to 216 (RTIG…NKRS). Residues 249–256 (RGFVYFVE) form a promoter-binding site region. The 198-residue stretch at 286–483 (VRKMMTNSQD…GINMSKKKSY (198 aa)) folds into the RdRp catalytic domain.

The protein belongs to the influenza viruses polymerase PB1 family. As to quaternary structure, influenza RNA polymerase is composed of three subunits: PB1, PB2 and PA. Interacts (via N-terminus) with PA (via C-terminus). Interacts (via C-terminus) with PB2 (via N-terminus); this interaction is essential for transcription initiation. Post-translationally, phosphorylated by host PRKCA.

The protein resides in the host nucleus. It is found in the host cytoplasm. The catalysed reaction is RNA(n) + a ribonucleoside 5'-triphosphate = RNA(n+1) + diphosphate. Its function is as follows. RNA-dependent RNA polymerase which is responsible for replication and transcription of virus RNA segments. The transcription of viral mRNAs occurs by a unique mechanism called cap-snatching. 5' methylated caps of cellular mRNAs are cleaved after 10-13 nucleotides by PA. In turn, these short capped RNAs are used as primers by PB1 for transcription of viral mRNAs. During virus replication, PB1 initiates RNA synthesis and copy vRNA into complementary RNA (cRNA) which in turn serves as a template for the production of more vRNAs. The protein is RNA-directed RNA polymerase catalytic subunit of Aves.